We begin with the raw amino-acid sequence, 223 residues long: Protein Mis18-alpha (223 aa).

The interval 1–30 (MAGTFSLEPCSTSSSCNHQGKRSESSLLEK) is disordered. Positions 9 to 18 (PCSTSSSCNH) are enriched in polar residues. Positions 21 to 30 (KRSESSLLEK) are enriched in basic and acidic residues. Ser33, Ser36, and Ser37 each carry phosphoserine. The region spanning 71–169 (PLVFLCTRCR…SVEAVESYTL (99 aa)) is the Mis18 domain. Residues Cys76, Cys79, Cys132, and Cys135 each contribute to the Zn(2+) site. Lys153 is covalently cross-linked (Glycyl lysine isopeptide (Lys-Gly) (interchain with G-Cter in SUMO2)). The residue at position 223 (Ser223) is a Phosphoserine.

Belongs to the mis18 family. In terms of assembly, homodimer, and heterodimer with OIP5/MIS18B. Identified in a complex containing MIS18A, OIP5/MIS18B, MIS18BP1, RBBP7 and RBBP4.

Its subcellular location is the nucleus. It localises to the chromosome. The protein resides in the centromere. Functionally, required for recruitment of CENPA to centromeres and normal chromosome segregation during mitosis. The protein is Protein Mis18-alpha (Mis18a) of Rattus norvegicus (Rat).